The following is a 264-amino-acid chain: tRNA pseudouridine synthase A (264 aa).

The active-site Nucleophile is D51. Position 109 (Y109) interacts with substrate.

It belongs to the tRNA pseudouridine synthase TruA family. In terms of assembly, homodimer.

The enzyme catalyses uridine(38/39/40) in tRNA = pseudouridine(38/39/40) in tRNA. In terms of biological role, formation of pseudouridine at positions 38, 39 and 40 in the anticodon stem and loop of transfer RNAs. The protein is tRNA pseudouridine synthase A of Vibrio vulnificus (strain CMCP6).